A 248-amino-acid chain; its full sequence is 3-deoxy-manno-octulosonate cytidylyltransferase (248 aa).

Belongs to the KdsB family.

The protein resides in the cytoplasm. It carries out the reaction 3-deoxy-alpha-D-manno-oct-2-ulosonate + CTP = CMP-3-deoxy-beta-D-manno-octulosonate + diphosphate. Its pathway is nucleotide-sugar biosynthesis; CMP-3-deoxy-D-manno-octulosonate biosynthesis; CMP-3-deoxy-D-manno-octulosonate from 3-deoxy-D-manno-octulosonate and CTP: step 1/1. It functions in the pathway bacterial outer membrane biogenesis; lipopolysaccharide biosynthesis. Activates KDO (a required 8-carbon sugar) for incorporation into bacterial lipopolysaccharide in Gram-negative bacteria. The sequence is that of 3-deoxy-manno-octulosonate cytidylyltransferase from Salmonella typhi.